The primary structure comprises 660 residues: tRNA 5-methylaminomethyl-2-thiouridine biosynthesis bifunctional protein MnmC (660 aa).

The interval 1-242 (MTDRIVPATL…KRAMLVGEFA (242 aa)) is tRNA (mnm(5)s(2)U34)-methyltransferase. Residues 266 to 660 (IGAGLAGCAV…VRALRHGRVA (395 aa)) are FAD-dependent cmnm(5)s(2)U34 oxidoreductase.

The protein in the N-terminal section; belongs to the methyltransferase superfamily. tRNA (mnm(5)s(2)U34)-methyltransferase family. It in the C-terminal section; belongs to the DAO family. FAD serves as cofactor.

The protein resides in the cytoplasm. The catalysed reaction is 5-aminomethyl-2-thiouridine(34) in tRNA + S-adenosyl-L-methionine = 5-methylaminomethyl-2-thiouridine(34) in tRNA + S-adenosyl-L-homocysteine + H(+). In terms of biological role, catalyzes the last two steps in the biosynthesis of 5-methylaminomethyl-2-thiouridine (mnm(5)s(2)U) at the wobble position (U34) in tRNA. Catalyzes the FAD-dependent demodification of cmnm(5)s(2)U34 to nm(5)s(2)U34, followed by the transfer of a methyl group from S-adenosyl-L-methionine to nm(5)s(2)U34, to form mnm(5)s(2)U34. The protein is tRNA 5-methylaminomethyl-2-thiouridine biosynthesis bifunctional protein MnmC of Burkholderia pseudomallei (strain 1106a).